A 245-amino-acid polypeptide reads, in one-letter code: Protein OXIDATIVE STRESS 3 LIKE 6 (245 aa).

A disordered region spans residues 46–90; sequence QIGIGLRMSNNNNKSPEESSDSSSSIGESSENEEEEEEDDAVSCQ. Acidic residues predominate over residues 75 to 86; the sequence is SENEEEEEEDDA. The Nuclear localization signal signature appears at 143–151; sequence NKRRRLVIA. Residues 203–230 form a kinase-inducible domain (KID) region; sequence DDHRKIMMMMKNKKELMAQTRSCFCLSS.

Its subcellular location is the nucleus. Its function is as follows. Probable transcription factor. Promotes slightly the tolerance to cadmium (Cd) and to oxidizing chemicals (e.g. diamide). This is Protein OXIDATIVE STRESS 3 LIKE 6 from Arabidopsis thaliana (Mouse-ear cress).